The primary structure comprises 346 residues: N-acetyl-gamma-glutamyl-phosphate reductase (346 aa).

Cys-151 is a catalytic residue.

It belongs to the NAGSA dehydrogenase family. Type 1 subfamily.

The protein resides in the cytoplasm. The catalysed reaction is N-acetyl-L-glutamate 5-semialdehyde + phosphate + NADP(+) = N-acetyl-L-glutamyl 5-phosphate + NADPH + H(+). The protein operates within amino-acid biosynthesis; L-arginine biosynthesis; N(2)-acetyl-L-ornithine from L-glutamate: step 3/4. Its function is as follows. Catalyzes the NADPH-dependent reduction of N-acetyl-5-glutamyl phosphate to yield N-acetyl-L-glutamate 5-semialdehyde. In Ehrlichia canis (strain Jake), this protein is N-acetyl-gamma-glutamyl-phosphate reductase.